Consider the following 390-residue polypeptide: Chalcone synthase (390 aa).

Residue Cys-164 is part of the active site.

Belongs to the thiolase-like superfamily. Chalcone/stilbene synthases family.

The catalysed reaction is (E)-4-coumaroyl-CoA + 3 malonyl-CoA + 3 H(+) = 2',4,4',6'-tetrahydroxychalcone + 3 CO2 + 4 CoA. Its pathway is secondary metabolite biosynthesis; flavonoid biosynthesis. Its function is as follows. The primary product of this enzyme is 4,2',4',6'-tetrahydroxychalcone (also termed naringenin-chalcone or chalcone) which can under specific conditions spontaneously isomerize into naringenin. The polypeptide is Chalcone synthase (CHS) (Antirrhinum majus (Garden snapdragon)).